The chain runs to 657 residues: Tyrosine-protein phosphatase vhp-1 (657 aa).

The Rhodanese domain occupies 21–151; that stretch reads APDTTLVVDC…FAQQYPQLCE (131 aa). Residues 175-318 enclose the Tyrosine-protein phosphatase domain; sequence GITLITPNIY…LLEYENVLIK (144 aa). Residue Cys-262 is the Phosphocysteine intermediate of the active site. Disordered stretches follow at residues 353 to 426, 539 to 563, and 581 to 657; these read SNCV…MDLG, VPAGSSSISTPSGSQSTPASASSSA, and PAST…PCHQ. The span at 366-405 shows a compositional bias: low complexity; it reads SPSSPSVSEGSAASEPETSSSAASSSSTASAPPSMPSTSE. The segment covering 406-419 has biased composition (polar residues); that stretch reads QGTSSGTVNVNGKR. Composition is skewed to low complexity over residues 542–563 and 581–597; these read GSSSISTPSGSQSTPASASSSA and PASTSTPASSTPGTSRA.

The protein belongs to the protein-tyrosine phosphatase family. Non-receptor class dual specificity subfamily. As to quaternary structure, may interact with pmk-3. As to expression, expressed in the pharynx, intestine, neurons and vulval hypodermal cells.

It carries out the reaction O-phospho-L-tyrosyl-[protein] + H2O = L-tyrosyl-[protein] + phosphate. Functionally, acts preferentially on the c-Jun N-terminal kinase (JNK) and p38 MAPKs. Plays an important role in the heavy metal stress response and in axon regeneration by negatively regulating the kgb-1 (JNK-like) and the pmk-1 (p38-type) MAPK signaling pathways. The sequence is that of Tyrosine-protein phosphatase vhp-1 (vhp-1) from Caenorhabditis elegans.